Consider the following 752-residue polypeptide: Neuroendocrine convertase 1 (752 aa).

Residues 1–27 form the signal peptide; sequence MKQRGWTLQCTAFTLFCVWCALNSVKA. Positions 28-110 are excised as a propeptide; the sequence is KRQFVNEWAA…QQYEKERRKR (83 aa). Residues 129-450 form the Peptidase S8 domain; it reads QWYLQDTRMT…FGLLNAKALV (322 aa). The Charge relay system role is filled by D167. A glycan (N-linked (GlcNAc...) asparagine) is linked at N173. H208 (charge relay system) is an active-site residue. 2 disulfide bridges follow: C225–C374 and C317–C347. The active-site Charge relay system is the S382. N-linked (GlcNAc...) asparagine glycosylation occurs at N401. In terms of domain architecture, P/Homo B spans 460-597; sequence NVPEKKECII…KLILHGTSSQ (138 aa). Cysteines 467 and 494 form a disulfide. Residues 631-662 form a disordered region; sequence PTQNSLNGNLLVPKNSSSSSVEDRRDEQVQGA. The N-linked (GlcNAc...) asparagine glycan is linked to N645.

This sequence belongs to the peptidase S8 family. Furin subfamily. Ca(2+) is required as a cofactor.

It is found in the cytoplasmic vesicle. The protein resides in the secretory vesicle. The catalysed reaction is Release of protein hormones, neuropeptides and renin from their precursors, generally by hydrolysis of -Lys-Arg-|- bonds.. Its function is as follows. Involved in the processing of hormone and other protein precursors at sites comprised of pairs of basic amino acid residues. Substrates include POMC, renin, enkephalin, dynorphin, somatostatin, insulin and AGRP. The chain is Neuroendocrine convertase 1 (Pcsk1) from Rattus norvegicus (Rat).